A 154-amino-acid polypeptide reads, in one-letter code: Large ribosomal subunit protein bL9 (154 aa).

It belongs to the bacterial ribosomal protein bL9 family.

Binds to the 23S rRNA. This is Large ribosomal subunit protein bL9 from Buchnera aphidicola subsp. Baizongia pistaciae (strain Bp).